A 208-amino-acid chain; its full sequence is 2-phospho-L-lactate guanylyltransferase (208 aa).

Belongs to the CofC family. Homodimer.

It catalyses the reaction (2S)-2-phospholactate + GTP + H(+) = (2S)-lactyl-2-diphospho-5'-guanosine + diphosphate. The protein operates within cofactor biosynthesis; coenzyme F420 biosynthesis. In terms of biological role, guanylyltransferase that catalyzes the activation of (2S)-2-phospholactate (2-PL) as (2S)-lactyl-2-diphospho-5'-guanosine, via the condensation of 2-PL with GTP. It is involved in the biosynthesis of coenzyme F420, a hydride carrier cofactor. The protein is 2-phospho-L-lactate guanylyltransferase of Methanosarcina mazei (strain ATCC BAA-159 / DSM 3647 / Goe1 / Go1 / JCM 11833 / OCM 88) (Methanosarcina frisia).